The primary structure comprises 427 residues: Gamma-glutamyl phosphate reductase (427 aa).

The protein belongs to the gamma-glutamyl phosphate reductase family.

It localises to the cytoplasm. It carries out the reaction L-glutamate 5-semialdehyde + phosphate + NADP(+) = L-glutamyl 5-phosphate + NADPH + H(+). The protein operates within amino-acid biosynthesis; L-proline biosynthesis; L-glutamate 5-semialdehyde from L-glutamate: step 2/2. Its function is as follows. Catalyzes the NADPH-dependent reduction of L-glutamate 5-phosphate into L-glutamate 5-semialdehyde and phosphate. The product spontaneously undergoes cyclization to form 1-pyrroline-5-carboxylate. The chain is Gamma-glutamyl phosphate reductase from Brucella melitensis biotype 2 (strain ATCC 23457).